The following is a 474-amino-acid chain: Trehalose-6-phosphate synthase (474 aa).

D-glucose 6-phosphate is bound at residue Arg-10. Residue 22–23 (GG) coordinates UDP-alpha-D-glucose. Positions 77 and 131 each coordinate D-glucose 6-phosphate. UDP-alpha-D-glucose is bound by residues Arg-263 and Lys-268. Residue Arg-301 coordinates D-glucose 6-phosphate. UDP-alpha-D-glucose-binding positions include Phe-340 and 366–370 (LVAKE).

This sequence belongs to the glycosyltransferase 20 family. In terms of assembly, homotetramer.

The catalysed reaction is D-glucose 6-phosphate + UDP-alpha-D-glucose = alpha,alpha-trehalose 6-phosphate + UDP + H(+). It participates in glycan biosynthesis; trehalose biosynthesis. Probably involved in the osmoprotection via the biosynthesis of trehalose. Catalyzes the transfer of glucose from UDP-alpha-D-glucose (UDP-Glc) to D-glucose 6-phosphate (Glc-6-P) to form trehalose-6-phosphate. Acts with retention of the anomeric configuration of the UDP-sugar donor. This chain is Trehalose-6-phosphate synthase, found in Enterobacter sp. (strain 638).